A 444-amino-acid polypeptide reads, in one-letter code: Argininosuccinate synthase (444 aa).

ATP is bound by residues 18 to 26 (AFSGGLDTS) and A44. Y100 lines the L-citrulline pocket. 2 residues coordinate ATP: G130 and T132. Residues T132, N136, and D137 each coordinate L-aspartate. N136 is a binding site for L-citrulline. Position 137 (D137) interacts with ATP. Positions 140 and 193 each coordinate L-citrulline. D195 contacts ATP. L-citrulline contacts are provided by T202, E204, and E281.

Belongs to the argininosuccinate synthase family. Type 2 subfamily. In terms of assembly, homotetramer.

Its subcellular location is the cytoplasm. It catalyses the reaction L-citrulline + L-aspartate + ATP = 2-(N(omega)-L-arginino)succinate + AMP + diphosphate + H(+). The protein operates within amino-acid biosynthesis; L-arginine biosynthesis; L-arginine from L-ornithine and carbamoyl phosphate: step 2/3. The polypeptide is Argininosuccinate synthase (Mannheimia succiniciproducens (strain KCTC 0769BP / MBEL55E)).